A 425-amino-acid polypeptide reads, in one-letter code: Serine--tRNA ligase (425 aa).

Residue 228–230 participates in L-serine binding; it reads TAE. ATP is bound at residue 259–261; that stretch reads RSE. Glu282 lines the L-serine pocket. 346–349 provides a ligand contact to ATP; sequence EIAS. An L-serine-binding site is contributed by Ser382.

Belongs to the class-II aminoacyl-tRNA synthetase family. Type-1 seryl-tRNA synthetase subfamily. In terms of assembly, homodimer. The tRNA molecule binds across the dimer.

It localises to the cytoplasm. It catalyses the reaction tRNA(Ser) + L-serine + ATP = L-seryl-tRNA(Ser) + AMP + diphosphate + H(+). The catalysed reaction is tRNA(Sec) + L-serine + ATP = L-seryl-tRNA(Sec) + AMP + diphosphate + H(+). Its pathway is aminoacyl-tRNA biosynthesis; selenocysteinyl-tRNA(Sec) biosynthesis; L-seryl-tRNA(Sec) from L-serine and tRNA(Sec): step 1/1. In terms of biological role, catalyzes the attachment of serine to tRNA(Ser). Is also able to aminoacylate tRNA(Sec) with serine, to form the misacylated tRNA L-seryl-tRNA(Sec), which will be further converted into selenocysteinyl-tRNA(Sec). The chain is Serine--tRNA ligase from Rickettsia peacockii (strain Rustic).